Consider the following 315-residue polypeptide: Methionyl-tRNA formyltransferase (315 aa).

Position 113–116 (113–116) interacts with (6S)-5,6,7,8-tetrahydrofolate; it reads SILP.

The protein belongs to the Fmt family.

The catalysed reaction is L-methionyl-tRNA(fMet) + (6R)-10-formyltetrahydrofolate = N-formyl-L-methionyl-tRNA(fMet) + (6S)-5,6,7,8-tetrahydrofolate + H(+). Attaches a formyl group to the free amino group of methionyl-tRNA(fMet). The formyl group appears to play a dual role in the initiator identity of N-formylmethionyl-tRNA by promoting its recognition by IF2 and preventing the misappropriation of this tRNA by the elongation apparatus. The protein is Methionyl-tRNA formyltransferase of Aliivibrio fischeri (strain MJ11) (Vibrio fischeri).